The sequence spans 94 residues: Citrate lyase acyl carrier protein (94 aa).

Ser14 bears the O-(phosphoribosyl dephospho-coenzyme A)serine mark.

It belongs to the CitD family. Oligomer with a subunit composition of (alpha,beta,gamma)6.

It is found in the cytoplasm. Covalent carrier of the coenzyme of citrate lyase. In Halothermothrix orenii (strain H 168 / OCM 544 / DSM 9562), this protein is Citrate lyase acyl carrier protein.